A 309-amino-acid polypeptide reads, in one-letter code: tRNA pseudouridine synthase B (309 aa).

The active-site Nucleophile is the D39. Residues 229-306 (LPRVVVHQES…ERVLTLRKVF (78 aa)) enclose the PUA domain.

Belongs to the pseudouridine synthase TruB family. Type 1 subfamily.

The enzyme catalyses uridine(55) in tRNA = pseudouridine(55) in tRNA. In terms of biological role, responsible for synthesis of pseudouridine from uracil-55 in the psi GC loop of transfer RNAs. This chain is tRNA pseudouridine synthase B, found in Thermotoga petrophila (strain ATCC BAA-488 / DSM 13995 / JCM 10881 / RKU-1).